The chain runs to 293 residues: tRNA (guanine(9)-N1)-methyltransferase (293 aa).

A disordered region spans residues 1-31 (MSNDEINQNEEKVKRTPPLPPVPEGMSKKQW). The residue at position 16 (T16) is a Phosphothreonine. A coiled-coil region spans residues 32-61 (KKMCKRQRWEENKAKYNAERRVKKKRLRHE). The 197-residue stretch at 83 to 279 (EPRINVNQTD…SVLPPRKLDA (197 aa)) folds into the SAM-dependent MTase TRM10-type domain. Residues 186–187 (LT), G206, 210–214 (DKNRY), C218, L232, and 244–246 (RVL) contribute to the S-adenosyl-L-methionine site. D210 (proton acceptor) is an active-site residue. At S283 the chain carries Phosphoserine.

Belongs to the class IV-like SAM-binding methyltransferase superfamily. TRM10 family. Monomer.

It is found in the cytoplasm. Its subcellular location is the nucleus. It carries out the reaction guanosine(9) in tRNA + S-adenosyl-L-methionine = N(1)-methylguanosine(9) in tRNA + S-adenosyl-L-homocysteine + H(+). S-adenosyl-L-methionine-dependent guanine N(1)-methyltransferase that catalyzes the formation of N(1)-methylguanine at position 9 (m1G9) in cytoplasmic tRNAs. The sequence is that of tRNA (guanine(9)-N1)-methyltransferase from Saccharomyces cerevisiae (strain ATCC 204508 / S288c) (Baker's yeast).